We begin with the raw amino-acid sequence, 603 residues long: Aspartate--tRNA(Asp/Asn) ligase (603 aa).

Positions 205–208 (QLFK) are aspartate. Residue arginine 227 coordinates L-aspartate. ATP is bound by residues 227 to 229 (RDE) and glutamine 236. Residue histidine 463 participates in L-aspartate binding. Glutamate 497 serves as a coordination point for ATP. Arginine 504 is an L-aspartate binding site. ATP is bound at residue 549 to 552 (GMDR).

The protein belongs to the class-II aminoacyl-tRNA synthetase family. Type 1 subfamily. As to quaternary structure, homodimer.

The protein resides in the cytoplasm. The catalysed reaction is tRNA(Asx) + L-aspartate + ATP = L-aspartyl-tRNA(Asx) + AMP + diphosphate. In terms of biological role, aspartyl-tRNA synthetase with relaxed tRNA specificity since it is able to aspartylate not only its cognate tRNA(Asp) but also tRNA(Asn). Reaction proceeds in two steps: L-aspartate is first activated by ATP to form Asp-AMP and then transferred to the acceptor end of tRNA(Asp/Asn). The protein is Aspartate--tRNA(Asp/Asn) ligase of Anaeromyxobacter dehalogenans (strain 2CP-1 / ATCC BAA-258).